The following is a 560-amino-acid chain: Calcium-binding and coiled-coil domain-containing protein 1-A (560 aa).

Coiled-coil stretches lie at residues 156 to 192 (KATF…EKRI) and 367 to 480 (WWQE…DKML). Positions 480–517 (LMEDKTDSSPPTLSVDLSDSDDESPGDEGVSQQLGPCS) are disordered. The span at 487 to 496 (SSPPTLSVDL) shows a compositional bias: low complexity.

The protein belongs to the CALCOCO family.

It is found in the cytoplasm. The protein localises to the nucleus. Functionally, may function as a coactivator for aryl hydrocarbon and nuclear receptors. This is Calcium-binding and coiled-coil domain-containing protein 1-A (calcoco1-a) from Xenopus laevis (African clawed frog).